The sequence spans 378 residues: O-methyltransferase dpfgI (378 aa).

S-adenosyl-L-methionine contacts are provided by residues 232 to 233, Asp-257, 279 to 280, and Arg-295; these read GG and NF. His-299 acts as the Proton acceptor in catalysis.

It belongs to the class I-like SAM-binding methyltransferase superfamily. Cation-independent O-methyltransferase family.

Its pathway is secondary metabolite biosynthesis; terpenoid biosynthesis. Its function is as follows. O-methyltransferase; part of the gene cluster that mediates the biosynthesis of diterpenoid pyrones. The first step of the pathway is the synthesis of the alpha-pyrone moiety by the polyketide synthase dpfgA via condensation of one acetyl-CoA starter unit with 3 malonyl-CoA units and 2 methylations. The alpha-pyrone is then combined with geranylgeranyl pyrophosphate (GGPP) formed by the GGPP synthase dpfgD through the action of the prenyltransferase dpfgC to yield a linear alpha-pyrone diterpenoid. Subsequent steps in the diterpenoid pyrone biosynthetic pathway involve the decalin core formation, which is initiated by the epoxidation of the C10-C11 olefin by the FAD-dependent oxidoreductase dpfgE, and is followed by a cyclization cascade catalyzed by the terpene cyclase dpfgB. The short chain dehydrogenase/reductase dpfgG then oxidizes the 8S hydroxy group to a ketone and the short chain dehydrogenase/reductase dpfgH reduces the ketone to the 8R hydroxy group to yield higginsianin B. Higginsianin B is further methylated by the methyltransferase dpfgI to produce the intermediate named FDDP B. The cytochrome P450 monooxygenase dfgpJ then catalyzes a three-step oxidation at C-27 to generate a carboxylic acid as well as C-26 hydroxylation. Finally, methyltransferase dpfgK methylates the carboxylic acid generated by dpfgJ, yielding the final diterpenoid pyrones from the pathway which were named FDDP D and FDDP E. The chain is O-methyltransferase dpfgI from Gibberella zeae (strain ATCC MYA-4620 / CBS 123657 / FGSC 9075 / NRRL 31084 / PH-1) (Wheat head blight fungus).